We begin with the raw amino-acid sequence, 275 residues long: Large ribosomal subunit protein uL2 (275 aa).

Disordered regions lie at residues 28 to 59 (KPYA…GGHK) and 224 to 275 (AMNP…RHKR). The span at 35-46 (DTQSSTAGRNNN) shows a compositional bias: polar residues. Over residues 50 to 59 (TTRHKGGGHK) the composition is skewed to basic residues.

This sequence belongs to the universal ribosomal protein uL2 family. In terms of assembly, part of the 50S ribosomal subunit. Forms a bridge to the 30S subunit in the 70S ribosome.

Its function is as follows. One of the primary rRNA binding proteins. Required for association of the 30S and 50S subunits to form the 70S ribosome, for tRNA binding and peptide bond formation. It has been suggested to have peptidyltransferase activity; this is somewhat controversial. Makes several contacts with the 16S rRNA in the 70S ribosome. This Paraburkholderia phymatum (strain DSM 17167 / CIP 108236 / LMG 21445 / STM815) (Burkholderia phymatum) protein is Large ribosomal subunit protein uL2.